Consider the following 789-residue polypeptide: Ribosomal protein S6 kinase alpha-5 (789 aa).

The Protein kinase 1 domain occupies 39 to 308 (FELLKVLGTG…ADEIKQHPFF (270 aa)). ATP-binding positions include 45 to 53 (LGTGAYGKV) and Lys-71. Catalysis depends on Asp-167, which acts as the Proton acceptor. Ser-202 is modified (phosphoserine; by autocatalysis). The AGC-kinase C-terminal domain occupies 309 to 377 (QNINWDDLAA…VAPSILFKRN (69 aa)). A Phosphoserine modification is found at Ser-350. A phosphoserine; by autocatalysis mark is found at Ser-366 and Ser-371. Residues 416 to 677 (DLKEKPLGEG…MSSLRYNEWL (262 aa)) enclose the Protein kinase 2 domain. ATP-binding positions include 422-430 (LGEGSFSIC) and Lys-445. Asp-534 serves as the catalytic Proton acceptor. Thr-571 and Thr-690 each carry phosphothreonine. The segment at 731–789 (AKRRKMKKTSTSTETRSSSSESSHSSSSHSHGKTTPTKTLQPTNPTDSNNPETIFQFSD) is disordered. A compositionally biased stretch (low complexity) spans 739-769 (TSTSTETRSSSSESSHSSSSHSHGKTTPTKT). Ser-740, Ser-742, and Ser-748 each carry phosphoserine; by autocatalysis. Positions 770 to 789 (LQPTNPTDSNNPETIFQFSD) are enriched in polar residues.

The protein belongs to the protein kinase superfamily. AGC Ser/Thr protein kinase family. S6 kinase subfamily. Requires Mg(2+) as cofactor. In terms of processing, ser-366 and Thr-571 phosphorylation is required for kinase activity. Ser-366 and Ser-202 are autophosphorylated by the C-terminal kinase domain, and their phosphorylation is essential for the catalytic activity of the N-terminal kinase domain. Phosphorylated at Ser-350, Thr-571 and Thr-690 by MAP kinases. Autophosphorylated at Ser-740, Ser-742 and Ser-748 by the N-terminal kinase domain. Widely expressed with high levels in heart, brain and placenta. Less abundant in lung, kidney and liver.

It localises to the nucleus. It carries out the reaction L-seryl-[protein] + ATP = O-phospho-L-seryl-[protein] + ADP + H(+). The catalysed reaction is L-threonyl-[protein] + ATP = O-phospho-L-threonyl-[protein] + ADP + H(+). Activated by phosphorylation at Ser-350, Thr-571 and Thr-690 by MAP kinases, and by further autophosphorylation of Ser-202, Ser-366 and Ser-371 by the activated C-terminal kinase domain. The active N-terminal kinase domain finally phosphorylates downstream substrates, as well as Ser-740, Ser-742 and Ser-748 in its own C-terminal region. Functionally, serine/threonine-protein kinase that is required for the mitogen or stress-induced phosphorylation of the transcription factors CREB1 and ATF1 and that contributes to gene activation by histone phosphorylation. Phosphorylates CREB1 and ATF1 in response to mitogenic or stress stimuli such as UV-C irradiation, epidermal growth factor (EGF) and anisomycin. Directly represses transcription via phosphorylation of 'Ser-1' of histone H2A. Phosphorylates 'Ser-10' of histone H3 in response to mitogenics, stress stimuli and EGF, which results in the transcriptional activation of several immediate early genes, including proto-oncogenes c-fos/FOS and c-jun/JUN. May also phosphorylate 'Ser-28' of histone H3. Mediates the mitogen- and stress-induced phosphorylation of high mobility group protein 1 (HMGN1/HMG14). The sequence is that of Ribosomal protein S6 kinase alpha-5 (RPS6KA5) from Gallus gallus (Chicken).